A 663-amino-acid chain; its full sequence is DNA ligase (663 aa).

Residues 31–35, 80–81, and E110 contribute to the NAD(+) site; these read DFEYD and SL. Catalysis depends on K112, which acts as the N6-AMP-lysine intermediate. Residues R133, E168, K284, and K308 each coordinate NAD(+). C402, C405, C420, and C425 together coordinate Zn(2+). Positions 586-663 constitute a BRCT domain; sequence IKDNRFEGKT…DEDKFRKMIE (78 aa).

It belongs to the NAD-dependent DNA ligase family. LigA subfamily. Requires Mg(2+) as cofactor. It depends on Mn(2+) as a cofactor.

It carries out the reaction NAD(+) + (deoxyribonucleotide)n-3'-hydroxyl + 5'-phospho-(deoxyribonucleotide)m = (deoxyribonucleotide)n+m + AMP + beta-nicotinamide D-nucleotide.. Its function is as follows. DNA ligase that catalyzes the formation of phosphodiester linkages between 5'-phosphoryl and 3'-hydroxyl groups in double-stranded DNA using NAD as a coenzyme and as the energy source for the reaction. It is essential for DNA replication and repair of damaged DNA. This chain is DNA ligase, found in Acetivibrio thermocellus (strain ATCC 27405 / DSM 1237 / JCM 9322 / NBRC 103400 / NCIMB 10682 / NRRL B-4536 / VPI 7372) (Clostridium thermocellum).